The following is a 123-amino-acid chain: Large ribosomal subunit protein bL12 (123 aa).

This sequence belongs to the bacterial ribosomal protein bL12 family. Homodimer. Part of the ribosomal stalk of the 50S ribosomal subunit. Forms a multimeric L10(L12)X complex, where L10 forms an elongated spine to which 2 to 4 L12 dimers bind in a sequential fashion. Binds GTP-bound translation factors.

In terms of biological role, forms part of the ribosomal stalk which helps the ribosome interact with GTP-bound translation factors. Is thus essential for accurate translation. In Ectopseudomonas mendocina (strain ymp) (Pseudomonas mendocina), this protein is Large ribosomal subunit protein bL12.